A 255-amino-acid chain; its full sequence is NAD kinase (255 aa).

Catalysis depends on D44, which acts as the Proton acceptor. Residues 44-45 (DG), 114-115 (NE), D144, A152, and 155-160 (TAYNLS) contribute to the NAD(+) site.

It belongs to the NAD kinase family. The cofactor is a divalent metal cation.

The protein resides in the cytoplasm. The enzyme catalyses NAD(+) + ATP = ADP + NADP(+) + H(+). Its function is as follows. Involved in the regulation of the intracellular balance of NAD and NADP, and is a key enzyme in the biosynthesis of NADP. Catalyzes specifically the phosphorylation on 2'-hydroxyl of the adenosine moiety of NAD to yield NADP. The chain is NAD kinase from Hyphomonas neptunium (strain ATCC 15444).